Consider the following 376-residue polypeptide: Growth/differentiation factor 8 (376 aa).

An N-terminal signal peptide occupies residues 1 to 24 (MIQKPQMYVYIYLFVLIAAGPVDL). Residues 25–267 (NEDSEREANV…VTDTPKRSRR (243 aa)) constitute a propeptide that is removed on maturation. The N-linked (GlcNAc...) asparagine glycan is linked to asparagine 72. 4 disulfides stabilise this stretch: cysteine 273–cysteine 283, cysteine 282–cysteine 341, cysteine 310–cysteine 373, and cysteine 314–cysteine 375.

It belongs to the TGF-beta family. In terms of assembly, homodimer; disulfide-linked. Interacts with WFIKKN2, leading to inhibit its activity. Interacts with FSTL3. Post-translationally, synthesized as large precursor molecule that undergoes proteolytic cleavage to generate an N-terminal propeptide and a disulfide linked C-terminal dimer, which is the biologically active molecule. The circulating form consists of a latent complex of the C-terminal dimer and other proteins, including its propeptide, which maintain the C-terminal dimer in a latent, inactive state. Ligand activation requires additional cleavage of the prodomain by a tolloid-like metalloproteinase.

It localises to the secreted. Its function is as follows. Acts specifically as a negative regulator of skeletal muscle growth. This Rattus norvegicus (Rat) protein is Growth/differentiation factor 8 (Mstn).